A 168-amino-acid polypeptide reads, in one-letter code: Vasopressin-neurophysin 2-copeptin (168 aa).

Residues 1-23 form the signal peptide; sequence MLAMMLNTTLSACFLSLLALTSA. Cys24 and Cys29 are oxidised to a cystine. Position 32 is a glycine amide (Gly32). Disulfide bonds link Cys45/Cys89, Cys48/Cys62, Cys56/Cys79, Cys63/Cys69, Cys96/Cys108, Cys102/Cys120, and Cys109/Cys114. Residue Asn135 is glycosylated (N-linked (GlcNAc...) asparagine).

This sequence belongs to the vasopressin/oxytocin family. As to quaternary structure, interacts with vasopressin receptors V1bR/AVPR1B (Ki=85 pM), V1aR/AVPR1A (Ki=0.6 nM) and V2R/AVPR2 (Ki=4.9 nM). Interacts with oxytocin receptor (OXTR) (Ki=110 nM).

It localises to the secreted. In terms of biological role, neurophysin 2 specifically binds vasopressin. Vasopressin has a direct antidiuretic action on the kidney, it also causes vasoconstriction of the peripheral vessels. Acts by binding to vasopressin receptors (V1bR/AVPR1B, V1aR/AVPR1A, and V2R/AVPR2). This chain is Vasopressin-neurophysin 2-copeptin (Avp), found in Rattus norvegicus (Rat).